The primary structure comprises 270 residues: Fibroblast growth factor 5 (270 aa).

An N-terminal signal peptide occupies residues 1 to 20 (MSLSFLLLLFLSHLILSAWA). The interval 25 to 86 (RLAPKGQPGP…EQSSFQWSPS (62 aa)) is disordered. Over residues 41–69 (PGGASSRRSSSSTATSSSSPASSSSAASR) the composition is skewed to low complexity. Residues 76-86 (LEQSSFQWSPS) are compositionally biased toward polar residues. Residue Asn112 is glycosylated (N-linked (GlcNAc...) asparagine). Residues 237–257 (EKKKPPNPVKPKVPLSAPRRS) are disordered.

The protein belongs to the heparin-binding growth factors family. Interacts with FGFR1 and FGFR2. Affinity between fibroblast growth factors (FGFs) and their receptors is increased by heparan sulfate glycosaminoglycans that function as coreceptors.

Its subcellular location is the secreted. In terms of biological role, plays an important role in the regulation of cell proliferation and cell differentiation. Required for normal regulation of the hair growth cycle. Functions as an inhibitor of hair elongation by promoting progression from anagen, the growth phase of the hair follicle, into catagen the apoptosis-induced regression phase. The polypeptide is Fibroblast growth factor 5 (FGF5) (Bos taurus (Bovine)).